A 178-amino-acid chain; its full sequence is Nucleoside-triphosphatase THEP1 (178 aa).

ATP-binding positions include 7–14 and 102–109; these read GEPGVGKT and VIIIDEIG.

The protein belongs to the THEP1 NTPase family. Monomer.

It carries out the reaction a ribonucleoside 5'-triphosphate + H2O = a ribonucleoside 5'-diphosphate + phosphate + H(+). Has nucleotide phosphatase activity towards ATP, GTP, CTP, TTP and UTP. May hydrolyze nucleoside diphosphates with lower efficiency. Does not have kinase activity. The polypeptide is Nucleoside-triphosphatase THEP1 (Aquifex aeolicus (strain VF5)).